The primary structure comprises 223 residues: Large ribosomal subunit protein bL25 (223 aa).

The protein belongs to the bacterial ribosomal protein bL25 family. CTC subfamily. As to quaternary structure, part of the 50S ribosomal subunit; part of the 5S rRNA/L5/L18/L25 subcomplex. Contacts the 5S rRNA. Binds to the 5S rRNA independently of L5 and L18.

Its function is as follows. This is one of the proteins that binds to the 5S RNA in the ribosome where it forms part of the central protuberance. The chain is Large ribosomal subunit protein bL25 from Albidiferax ferrireducens (strain ATCC BAA-621 / DSM 15236 / T118) (Rhodoferax ferrireducens).